A 181-amino-acid polypeptide reads, in one-letter code: Adenine phosphoribosyltransferase (181 aa).

Belongs to the purine/pyrimidine phosphoribosyltransferase family. Homodimer.

It is found in the cytoplasm. The catalysed reaction is AMP + diphosphate = 5-phospho-alpha-D-ribose 1-diphosphate + adenine. It participates in purine metabolism; AMP biosynthesis via salvage pathway; AMP from adenine: step 1/1. Its function is as follows. Catalyzes a salvage reaction resulting in the formation of AMP, that is energically less costly than de novo synthesis. This chain is Adenine phosphoribosyltransferase, found in Aliivibrio fischeri (strain ATCC 700601 / ES114) (Vibrio fischeri).